Here is an 888-residue protein sequence, read N- to C-terminus: Semaphorin-6B (888 aa).

The signal sequence occupies residues 1 to 25; sequence MQTPRASPPRPALLLLLLLLGGAHG. The Extracellular portion of the chain corresponds to 26-603; the sequence is LFPEEPPPLS…VSVNLLVTSS (578 aa). The 493-residue stretch at 31–523 folds into the Sema domain; the sequence is PPPLSVAPRD…FPRCVVRVPV (493 aa). A glycan (N-linked (GlcNAc...) asparagine) is linked at asparagine 74. Cystine bridges form between cysteine 116/cysteine 126 and cysteine 144/cysteine 153. N-linked (GlcNAc...) asparagine glycans are attached at residues asparagine 155, asparagine 167, and asparagine 291. Disulfide bonds link cysteine 267–cysteine 378 and cysteine 292–cysteine 337. Asparagine 386, asparagine 441, and asparagine 462 each carry an N-linked (GlcNAc...) asparagine glycan. Disulfide bonds link cysteine 486/cysteine 517, cysteine 526/cysteine 544, cysteine 532/cysteine 578, and cysteine 536/cysteine 552. A helical transmembrane segment spans residues 604–624; that stretch reads VAAFVVGAVVSGFSVGWFVGL. Over 625–888 the chain is Cytoplasmic; it reads RERRELARRK…GADRTAPPVP (264 aa). Disordered stretches follow at residues 651-679, 695-742, and 757-888; these read VSRL…PPEA, LQGG…HPLL, and RAPE…PPVP. Positions 661 to 674 are enriched in gly residues; the sequence is GPGGRGGGGGGGAG. Arginine 665 carries the post-translational modification Omega-N-methylarginine. A compositionally biased stretch (low complexity) spans 706–717; it reads LLPTPEQTPLPQ.

The protein belongs to the semaphorin family. As to quaternary structure, (Microbial infection) Interacts with P.sordellii toxin TcsL; semaphorins SEMA6A and SEMA6B constitute the major host receptors for TcsL in the vascular endothelium. As to expression, expressed in the brain in GABAergic neurons.

It is found in the cell membrane. Functionally, functions as a cell surface repellent for mossy fibers of developing neurons in the hippocampus where it plays a role in axon guidance. May function through the PLXNA4 receptor expressed by mossy cell axons. In terms of biological role, (Microbial infection) Acts as a receptor for P.sordellii toxin TcsL in the in the vascular endothelium. This Homo sapiens (Human) protein is Semaphorin-6B (SEMA6B).